The chain runs to 57 residues: Amyloid-beta precursor protein (57 aa).

Residues 1–33 (SEVKMDAEFRHDSGYEVHHQKLVFFAEDVGSNK) lie on the Extracellular side of the membrane. H11, Y15, H18, and H19 together coordinate Cu(2+). Zn(2+) contacts are provided by H11, Y15, H18, and H19. Residues 34–57 (GAIIGLMVGGVVIATVIVITLVML) form a helical membrane-spanning segment.

It belongs to the APP family. Binds, via its C-terminus, to the PID domain of several cytoplasmic proteins, including APBB family members, the APBA family, MAPK8IP1, SHC1 and NUMB and DAB1. Binding to DAB1 inhibits its serine phosphorylation. Interacts (via NPXY motif) with DAB2 (via PID domain); the interaction is impaired by tyrosine phosphorylation of the NPXY motif. Also interacts with GPCR-like protein BPP, APPBP1, IB1, KNS2 (via its TPR domains), APPBP2 (via BaSS) and DDB1. In vitro, it binds MAPT via the MT-binding domains. Associates with microtubules in the presence of ATP and in a kinesin-dependent manner. Interacts, through a C-terminal domain, with GNAO1. Interacts with CPEB1, ANKS1B, TNFRSF21 and AGER. Interacts with ITM2B. Interacts with ITM2C. Interacts with IDE. Can form homodimers; dimerization is enhanced in the presence of Cu(2+) ions. Can form homodimers; this is promoted by heparin binding. Interacts with SORL1 (via N-terminal ectodomain); this interaction retains APP in the trans-Golgi network and reduces processing into soluble APP-alpha and amyloid-beta peptides. Interacts with PLD3. Interacts with VDAC1. Interacts with NSG1; could regulate APP processing. Amyloid-beta protein 42 interacts with FPR2. Interacts with LRRK2. Interacts (via cytoplasmic domain) with KIF5B. Interacts (via C-terminus) with APBB2/FE65L1 (via C-terminus). Interacts (via intracellular domain) with APBB3. Proteolytically processed under normal cellular conditions. Cleavage either by alpha-secretase, beta-secretase or theta-secretase leads to generation and extracellular release of soluble APP peptides, S-APP-alpha and S-APP-beta, and the retention of corresponding membrane-anchored C-terminal fragments, C80, C83 and C99. Subsequent processing of C80 and C83 by gamma-secretase yields P3 peptides. This is the major secretory pathway and is non-amyloidogenic. Alternatively, presenilin/nicastrin-mediated gamma-secretase processing of C99 releases the amyloid-beta proteins, amyloid-beta protein 40 and amyloid-beta protein 42, major components of amyloid plaques, and the cytotoxic C-terminal fragments, gamma-CTF(50), gamma-CTF(57) and gamma-CTF(59). PSEN1 cleavage is more efficient with C83 than with C99 as substrate (in vitro). Amyloid-beta protein 40 and Amyloid-beta protein 42 are cleaved by ACE. Many other minor amyloid-beta peptides, amyloid-beta 1-X peptides, are found in cerebral spinal fluid (CSF) including the amyloid-beta X-15 peptides, produced from the cleavage by alpha-secretase.

It is found in the cell membrane. The protein resides in the membrane. The protein localises to the perikaryon. Its subcellular location is the cell projection. It localises to the growth cone. It is found in the clathrin-coated pit. The protein resides in the early endosome. The protein localises to the cytoplasmic vesicle. Its subcellular location is the secreted. It localises to the cell surface. It is found in the nucleus. The protein resides in the cytoplasm. Functionally, functions as a cell surface receptor and performs physiological functions on the surface of neurons relevant to neurite growth, neuronal adhesion and axonogenesis. Interaction between APP molecules on neighboring cells promotes synaptogenesis. Involved in cell mobility and transcription regulation through protein-protein interactions. Can promote transcription activation through binding to APBB1-KAT5 and inhibit Notch signaling through interaction with Numb. Couples to apoptosis-inducing pathways such as those mediated by G(o) and JIP. Inhibits G(o)-alpha ATPase activity. Acts as a kinesin I membrane receptor, mediating the axonal transport of beta-secretase and presenilin 1. By acting as a kinesin I membrane receptor, plays a role in axonal anterograde transport of cargo towards synapses in axons. May be involved in copper homeostasis/oxidative stress through copper ion reduction. In vitro, copper-metallated APP induces neuronal death directly or is potentiated through Cu(2+)-mediated low-density lipoprotein oxidation. Can regulate neurite outgrowth through binding to components of the extracellular matrix such as heparin and collagen I and IV. Induces a AGER-dependent pathway that involves activation of p38 MAPK, resulting in internalization of amyloid-beta peptide and mitochondrial dysfunction in cultured cortical neurons. Provides Cu(2+) ions for GPC1 which are required for release of nitric oxide (NO) and subsequent degradation of the heparan sulfate chains on GPC1. The sequence is that of Amyloid-beta precursor protein (APP) from Ursus maritimus (Polar bear).